The sequence spans 315 residues: Glutamyl-Q tRNA(Asp) synthetase (315 aa).

L-glutamate contacts are provided by residues 21–25 and glutamate 63; that span reads RFAPS. The 'HIGH' region motif lies at 24-34; that stretch reads PSPSGLLHFGS. Zn(2+) is bound by residues cysteine 119, cysteine 121, tyrosine 133, and cysteine 137. The L-glutamate site is built by tyrosine 190 and arginine 208. Residues 251-255 carry the 'KMSKS' region motif; sequence KLSKQ. Position 254 (lysine 254) interacts with ATP.

Belongs to the class-I aminoacyl-tRNA synthetase family. GluQ subfamily. Requires Zn(2+) as cofactor.

Catalyzes the tRNA-independent activation of glutamate in presence of ATP and the subsequent transfer of glutamate onto a tRNA(Asp). Glutamate is transferred on the 2-amino-5-(4,5-dihydroxy-2-cyclopenten-1-yl) moiety of the queuosine in the wobble position of the QUC anticodon. This is Glutamyl-Q tRNA(Asp) synthetase from Colwellia psychrerythraea (strain 34H / ATCC BAA-681) (Vibrio psychroerythus).